A 479-amino-acid chain; its full sequence is ATP synthase subunit beta (479 aa).

Position 160 to 167 (G160 to T167) interacts with ATP.

It belongs to the ATPase alpha/beta chains family. F-type ATPases have 2 components, CF(1) - the catalytic core - and CF(0) - the membrane proton channel. CF(1) has five subunits: alpha(3), beta(3), gamma(1), delta(1), epsilon(1). CF(0) has three main subunits: a(1), b(2) and c(9-12). The alpha and beta chains form an alternating ring which encloses part of the gamma chain. CF(1) is attached to CF(0) by a central stalk formed by the gamma and epsilon chains, while a peripheral stalk is formed by the delta and b chains.

The protein resides in the cell inner membrane. It carries out the reaction ATP + H2O + 4 H(+)(in) = ADP + phosphate + 5 H(+)(out). In terms of biological role, produces ATP from ADP in the presence of a proton gradient across the membrane. The catalytic sites are hosted primarily by the beta subunits. This is ATP synthase subunit beta from Anaplasma phagocytophilum (strain HZ).